Reading from the N-terminus, the 865-residue chain is Bifunctional uridylyltransferase/uridylyl-removing enzyme (865 aa).

Residues 1–318 (MPHVDLNPLK…FPRPDSDARL (318 aa)) are uridylyltransferase. The tract at residues 319–675 (IDDDFRNLRE…VRPTEHGEGL (357 aa)) is uridylyl-removing. The 123-residue stretch at 437–559 (VDQHTLAVVR…VGDERRLAAL (123 aa)) folds into the HD domain. 2 ACT domains span residues 676 to 762 (QVMV…RLPH) and 789 to 865 (RLSV…QQAA). The disordered stretch occupies residues 747-767 (DPHAARHAHAPRRLPHSHARR). The span at 751-767 (ARHAHAPRRLPHSHARR) shows a compositional bias: basic residues.

The protein belongs to the GlnD family. It depends on Mg(2+) as a cofactor.

It carries out the reaction [protein-PII]-L-tyrosine + UTP = [protein-PII]-uridylyl-L-tyrosine + diphosphate. The catalysed reaction is [protein-PII]-uridylyl-L-tyrosine + H2O = [protein-PII]-L-tyrosine + UMP + H(+). Its activity is regulated as follows. Uridylyltransferase (UTase) activity is inhibited by glutamine, while glutamine activates uridylyl-removing (UR) activity. Modifies, by uridylylation and deuridylylation, the PII regulatory proteins (GlnB and homologs), in response to the nitrogen status of the cell that GlnD senses through the glutamine level. Under low glutamine levels, catalyzes the conversion of the PII proteins and UTP to PII-UMP and PPi, while under higher glutamine levels, GlnD hydrolyzes PII-UMP to PII and UMP (deuridylylation). Thus, controls uridylylation state and activity of the PII proteins, and plays an important role in the regulation of nitrogen assimilation and metabolism. This chain is Bifunctional uridylyltransferase/uridylyl-removing enzyme, found in Bordetella bronchiseptica (strain ATCC BAA-588 / NCTC 13252 / RB50) (Alcaligenes bronchisepticus).